The following is a 182-amino-acid chain: Ribosome-recycling factor (182 aa).

The protein belongs to the RRF family.

The protein localises to the cytoplasm. Its function is as follows. Responsible for the release of ribosomes from messenger RNA at the termination of protein biosynthesis. May increase the efficiency of translation by recycling ribosomes from one round of translation to another. This is Ribosome-recycling factor from Prochlorococcus marinus (strain AS9601).